The following is a 429-amino-acid chain: Glutamate-1-semialdehyde 2,1-aminomutase (429 aa).

Lys270 bears the N6-(pyridoxal phosphate)lysine mark.

Belongs to the class-III pyridoxal-phosphate-dependent aminotransferase family. HemL subfamily. In terms of assembly, homodimer. Pyridoxal 5'-phosphate serves as cofactor.

Its subcellular location is the cytoplasm. The enzyme catalyses (S)-4-amino-5-oxopentanoate = 5-aminolevulinate. It participates in porphyrin-containing compound metabolism; protoporphyrin-IX biosynthesis; 5-aminolevulinate from L-glutamyl-tRNA(Glu): step 2/2. The polypeptide is Glutamate-1-semialdehyde 2,1-aminomutase (Cupriavidus pinatubonensis (strain JMP 134 / LMG 1197) (Cupriavidus necator (strain JMP 134))).